The sequence spans 261 residues: DNA repair protein RecO (261 aa).

It belongs to the RecO family.

In terms of biological role, involved in DNA repair and RecF pathway recombination. The polypeptide is DNA repair protein RecO (Mycobacteroides abscessus (strain ATCC 19977 / DSM 44196 / CCUG 20993 / CIP 104536 / JCM 13569 / NCTC 13031 / TMC 1543 / L948) (Mycobacterium abscessus)).